The primary structure comprises 216 residues: Phosphatidylserine decarboxylase proenzyme (216 aa).

Serine 182 serves as the catalytic Schiff-base intermediate with substrate; via pyruvic acid. The residue at position 182 (serine 182) is a Pyruvic acid (Ser); by autocatalysis.

This sequence belongs to the phosphatidylserine decarboxylase family. PSD-A subfamily. In terms of assembly, heterodimer of a large membrane-associated beta subunit and a small pyruvoyl-containing alpha subunit. The cofactor is pyruvate. Is synthesized initially as an inactive proenzyme. Formation of the active enzyme involves a self-maturation process in which the active site pyruvoyl group is generated from an internal serine residue via an autocatalytic post-translational modification. Two non-identical subunits are generated from the proenzyme in this reaction, and the pyruvate is formed at the N-terminus of the alpha chain, which is derived from the carboxyl end of the proenzyme. The post-translation cleavage follows an unusual pathway, termed non-hydrolytic serinolysis, in which the side chain hydroxyl group of the serine supplies its oxygen atom to form the C-terminus of the beta chain, while the remainder of the serine residue undergoes an oxidative deamination to produce ammonia and the pyruvoyl prosthetic group on the alpha chain.

Its subcellular location is the cell membrane. It catalyses the reaction a 1,2-diacyl-sn-glycero-3-phospho-L-serine + H(+) = a 1,2-diacyl-sn-glycero-3-phosphoethanolamine + CO2. The protein operates within phospholipid metabolism; phosphatidylethanolamine biosynthesis; phosphatidylethanolamine from CDP-diacylglycerol: step 2/2. Its function is as follows. Catalyzes the formation of phosphatidylethanolamine (PtdEtn) from phosphatidylserine (PtdSer). This is Phosphatidylserine decarboxylase proenzyme from Burkholderia mallei (strain NCTC 10247).